The primary structure comprises 93 residues: Small ribosomal subunit protein uS19 (93 aa).

It belongs to the universal ribosomal protein uS19 family.

Protein S19 forms a complex with S13 that binds strongly to the 16S ribosomal RNA. The polypeptide is Small ribosomal subunit protein uS19 (Mycobacteroides abscessus (strain ATCC 19977 / DSM 44196 / CCUG 20993 / CIP 104536 / JCM 13569 / NCTC 13031 / TMC 1543 / L948) (Mycobacterium abscessus)).